The following is a 193-amino-acid chain: Peptide deformylase (193 aa).

Fe cation is bound by residues cysteine 111 and histidine 155. Residue glutamate 156 is part of the active site. Residue histidine 159 participates in Fe cation binding.

It belongs to the polypeptide deformylase family. The cofactor is Fe(2+).

It catalyses the reaction N-terminal N-formyl-L-methionyl-[peptide] + H2O = N-terminal L-methionyl-[peptide] + formate. Functionally, removes the formyl group from the N-terminal Met of newly synthesized proteins. Requires at least a dipeptide for an efficient rate of reaction. N-terminal L-methionine is a prerequisite for activity but the enzyme has broad specificity at other positions. This Mycoplasma genitalium (strain ATCC 33530 / DSM 19775 / NCTC 10195 / G37) (Mycoplasmoides genitalium) protein is Peptide deformylase.